We begin with the raw amino-acid sequence, 145 residues long: Transcriptional regulator MraZ (145 aa).

2 SpoVT-AbrB domains span residues 5-47 (EHQH…PLPE) and 76-119 (AVEC…AKDQ).

It belongs to the MraZ family. In terms of assembly, forms oligomers.

Its subcellular location is the cytoplasm. The protein localises to the nucleoid. The protein is Transcriptional regulator MraZ of Pelotomaculum thermopropionicum (strain DSM 13744 / JCM 10971 / SI).